A 98-amino-acid chain; its full sequence is Small ribosomal subunit protein bTHXm (98 aa).

Residues 1–35 (MAAMQWCGAMTRRIMMTQRTSAALNCSARYSSLSP) constitute a mitochondrion transit peptide. Residues 52–71 (DKKTKKGKRFKGSYGNSRGK) form a disordered region. Residues 53 to 62 (KKTKKGKRFK) are compositionally biased toward basic residues.

It belongs to the bacterial ribosomal protein bTHX family. As to quaternary structure, component of the mitochondrial ribosome small subunit.

The protein resides in the mitochondrion. The polypeptide is Small ribosomal subunit protein bTHXm (Arabidopsis thaliana (Mouse-ear cress)).